A 342-amino-acid polypeptide reads, in one-letter code: MTDAYQKAGVDVTAGYEVVARIQKKVGADNHNIGSFGGQYALEMAQYQKPVLVSSTDGVGTKLMVAFAADQHATIGIDCVAMCVNDIVAQGAQPLYFLDYLATGKTDPDKIEDIVAGVLEGCKQANMALIGGETAEMPGMYAAKHYDVAGFAVGIAEQDALVTGETIQAGDVLIGLASSGIHSNGYSLVRKIFFEQNNLTVASQLPELPGKTLGDWLLTPTKIYVEDLQPLLQQRVIKGAAHITGGGFIENVPRMLPADLAAHLTLGSWPILPIFKALQQYGQLAEMEMYNIFNMGIGMVLAVAPEAAPAVLAQLNAKQEQAYQIGTVQKRQQAAVELVTAK.

It belongs to the AIR synthase family.

The protein resides in the cytoplasm. The catalysed reaction is 2-formamido-N(1)-(5-O-phospho-beta-D-ribosyl)acetamidine + ATP = 5-amino-1-(5-phospho-beta-D-ribosyl)imidazole + ADP + phosphate + H(+). It functions in the pathway purine metabolism; IMP biosynthesis via de novo pathway; 5-amino-1-(5-phospho-D-ribosyl)imidazole from N(2)-formyl-N(1)-(5-phospho-D-ribosyl)glycinamide: step 2/2. The protein is Phosphoribosylformylglycinamidine cyclo-ligase of Latilactobacillus sakei subsp. sakei (strain 23K) (Lactobacillus sakei subsp. sakei).